Here is a 130-residue protein sequence, read N- to C-terminus: Small ribosomal subunit protein uS9 (130 aa).

A disordered region spans residues 102–130; it reads GFLTRDPRMKERKKYGLKKARRAPQFSKR. Positions 111–130 are enriched in basic residues; the sequence is KERKKYGLKKARRAPQFSKR.

Belongs to the universal ribosomal protein uS9 family.

This Clostridium novyi (strain NT) protein is Small ribosomal subunit protein uS9.